We begin with the raw amino-acid sequence, 542 residues long: Putative beta-glucosidase 23 (542 aa).

An N-terminal signal peptide occupies residues 1 to 29 (MAACTSSLVSLLLLLLLLLLLLVAGEATA). An N-linked (GlcNAc...) asparagine glycan is attached at asparagine 34. Position 88 (glutamine 88) interacts with a beta-D-glucoside. Asparagine 135 carries N-linked (GlcNAc...) asparagine glycosylation. Histidine 216 serves as a coordination point for a beta-D-glucoside. The active-site Proton donor is glutamate 262. The cysteines at positions 281 and 289 are disulfide-linked. An a beta-D-glucoside-binding site is contributed by tyrosine 405. N-linked (GlcNAc...) asparagine glycosylation is present at asparagine 445. Residues tryptophan 476 and phenylalanine 492 each contribute to the a beta-D-glucoside site.

Belongs to the glycosyl hydrolase 1 family.

It catalyses the reaction Hydrolysis of terminal, non-reducing beta-D-glucosyl residues with release of beta-D-glucose.. The chain is Putative beta-glucosidase 23 (BGLU23) from Oryza sativa subsp. japonica (Rice).